Here is a 114-residue protein sequence, read N- to C-terminus: Nuclear transition protein 2 (114 aa).

Positions 1 to 114 (MDTKMQSLPT…KRRSSGRRYK (114 aa)) are disordered. Positions 12, 14, 16, 24, 29, 31, 35, and 38 each coordinate Zn(2+). Residues 16 to 25 (HSSSRPQSHT) are compositionally biased toward low complexity. Positions 87–95 (GKVSKRKAV) match the Nuclear localization signal motif. The span at 90-114 (SKRKAVRRRKRTHRAKRRSSGRRYK) shows a compositional bias: basic residues. Thr-101 carries the phosphothreonine; by PKA modification. Phosphoserine; by PKA is present on Ser-109.

It belongs to the nuclear transition protein 2 family. Testis.

It localises to the nucleus. It is found in the nucleolus. The protein localises to the chromosome. Functionally, plays a key role in the replacement of histones to protamine in the elongating spermatids of mammals. In condensing spermatids, loaded onto the nucleosomes, where it promotes the recruitment and processing of protamines, which are responsible for histone eviction. The protein is Nuclear transition protein 2 (Tnp2) of Rattus norvegicus (Rat).